The primary structure comprises 372 residues: Chaperone protein DnaJ (372 aa).

The 66-residue stretch at 3–68 folds into the J domain; the sequence is NLYEILEVNE…EKRKKYDMYG (66 aa). The segment at 130-212 adopts a CR-type zinc-finger fold; the sequence is GTKKEISYKK…CKGKGYEIER (83 aa). Zn(2+)-binding residues include Cys-143, Cys-146, Cys-160, Cys-163, Cys-186, Cys-189, Cys-200, and Cys-203. CXXCXGXG motif repeat units follow at residues 143–150, 160–167, 186–193, and 200–207; these read CHVCNGDG, CEKCHGTG, CDKCHGEG, and CENCKGKG.

Belongs to the DnaJ family. As to quaternary structure, homodimer. Requires Zn(2+) as cofactor.

The protein resides in the cytoplasm. In terms of biological role, participates actively in the response to hyperosmotic and heat shock by preventing the aggregation of stress-denatured proteins and by disaggregating proteins, also in an autonomous, DnaK-independent fashion. Unfolded proteins bind initially to DnaJ; upon interaction with the DnaJ-bound protein, DnaK hydrolyzes its bound ATP, resulting in the formation of a stable complex. GrpE releases ADP from DnaK; ATP binding to DnaK triggers the release of the substrate protein, thus completing the reaction cycle. Several rounds of ATP-dependent interactions between DnaJ, DnaK and GrpE are required for fully efficient folding. Also involved, together with DnaK and GrpE, in the DNA replication of plasmids through activation of initiation proteins. The sequence is that of Chaperone protein DnaJ from Finegoldia magna (strain ATCC 29328 / DSM 20472 / WAL 2508) (Peptostreptococcus magnus).